We begin with the raw amino-acid sequence, 102 residues long: Cytochrome b (102 aa).

Transmembrane regions (helical) follow at residues 1–21 (FGSL…FLAM), 45–66 (WLIR…YLHI), and 81–101 (WNIG…GYVL). Positions 51 and 65 each coordinate heme b.

This sequence belongs to the cytochrome b family. In terms of assembly, the cytochrome bc1 complex contains 3 respiratory subunits (MT-CYB, CYC1 and UQCRFS1), 2 core proteins (UQCRC1 and UQCRC2) and probably 6 low-molecular weight proteins. Requires heme b as cofactor.

Its subcellular location is the mitochondrion inner membrane. In terms of biological role, component of the ubiquinol-cytochrome c reductase complex (complex III or cytochrome b-c1 complex) that is part of the mitochondrial respiratory chain. The b-c1 complex mediates electron transfer from ubiquinol to cytochrome c. Contributes to the generation of a proton gradient across the mitochondrial membrane that is then used for ATP synthesis. The polypeptide is Cytochrome b (mt-cyb) (Megalops atlanticus (Tarpon)).